The primary structure comprises 291 residues: ATP synthase gamma chain (291 aa).

The protein belongs to the ATPase gamma chain family. As to quaternary structure, F-type ATPases have 2 components, CF(1) - the catalytic core - and CF(0) - the membrane proton channel. CF(1) has five subunits: alpha(3), beta(3), gamma(1), delta(1), epsilon(1). CF(0) has three main subunits: a, b and c.

It is found in the cell inner membrane. Produces ATP from ADP in the presence of a proton gradient across the membrane. The gamma chain is believed to be important in regulating ATPase activity and the flow of protons through the CF(0) complex. This chain is ATP synthase gamma chain, found in Burkholderia lata (strain ATCC 17760 / DSM 23089 / LMG 22485 / NCIMB 9086 / R18194 / 383).